The sequence spans 126 residues: Urease subunit beta (126 aa).

The protein belongs to the urease beta subunit family. In terms of assembly, heterotrimer of UreA (gamma), UreB (beta) and UreC (alpha) subunits. Three heterotrimers associate to form the active enzyme.

The protein localises to the cytoplasm. The enzyme catalyses urea + 2 H2O + H(+) = hydrogencarbonate + 2 NH4(+). The protein operates within nitrogen metabolism; urea degradation; CO(2) and NH(3) from urea (urease route): step 1/1. This is Urease subunit beta from Frankia casuarinae (strain DSM 45818 / CECT 9043 / HFP020203 / CcI3).